We begin with the raw amino-acid sequence, 352 residues long: Respiratory nitrate reductase subunit beta (352 aa).

A 4Fe-4S ferredoxin-type 1 domain is found at Val20–Gly48. [4Fe-4S] cluster-binding residues include Cys29, Cys32, Cys35, and Cys39. Disordered regions lie at residues Lys63–Tyr95 and Ser111–Gln131. Residues Ser78–Tyr95 show a composition bias toward basic and acidic residues. 4Fe-4S ferredoxin-type domains follow at residues Ser139–Glu170 and Gly172–Thr201. The [4Fe-4S] cluster site is built by Cys148, Cys151, and Cys156. Residues Cys160, Cys181, and Cys187 each coordinate [3Fe-4S] cluster. [4Fe-4S] cluster contacts are provided by Cys191, Cys208, Cys211, Cys229, and Cys233.

Probable multiprotein complex; a catalytic heterodimer of an alpha and beta chain is proposed to associate with additional subunits involved in membrane attachment and electron transfer. [4Fe-4S] cluster serves as cofactor. The cofactor is [3Fe-4S] cluster.

Its subcellular location is the cell membrane. The catalysed reaction is nitrate + a quinol = a quinone + nitrite + H2O. Its activity is regulated as follows. Inhibited by cyanide, azide and antimycin A. Enzyme stability is not dependent on salt concentration. In terms of biological role, the respiratory membrane-bound nitrate reductase enzyme complex plays a role in generation of metabolic energy by using nitrate as a terminal electron acceptor during anaerobic conditions. The beta chain is an electron transfer unit containing four cysteine clusters involved in the formation of iron-sulfur centers. This is Respiratory nitrate reductase subunit beta (narH) from Haloferax mediterranei (strain ATCC 33500 / DSM 1411 / JCM 8866 / NBRC 14739 / NCIMB 2177 / R-4) (Halobacterium mediterranei).